A 127-amino-acid chain; its full sequence is Holo-[acyl-carrier-protein] synthase (127 aa).

Mg(2+)-binding residues include D7 and E56.

Belongs to the P-Pant transferase superfamily. AcpS family. The cofactor is Mg(2+).

Its subcellular location is the cytoplasm. The catalysed reaction is apo-[ACP] + CoA = holo-[ACP] + adenosine 3',5'-bisphosphate + H(+). Its function is as follows. Transfers the 4'-phosphopantetheine moiety from coenzyme A to a Ser of acyl-carrier-protein. This Leptospira biflexa serovar Patoc (strain Patoc 1 / Ames) protein is Holo-[acyl-carrier-protein] synthase.